Consider the following 462-residue polypeptide: ATP synthase subunit beta (462 aa).

An ATP-binding site is contributed by 152-159; sequence GGAGVGKT.

This sequence belongs to the ATPase alpha/beta chains family. As to quaternary structure, F-type ATPases have 2 components, CF(1) - the catalytic core - and CF(0) - the membrane proton channel. CF(1) has five subunits: alpha(3), beta(3), gamma(1), delta(1), epsilon(1). CF(0) has three main subunits: a(1), b(2) and c(9-12). The alpha and beta chains form an alternating ring which encloses part of the gamma chain. CF(1) is attached to CF(0) by a central stalk formed by the gamma and epsilon chains, while a peripheral stalk is formed by the delta and b chains.

It is found in the cell inner membrane. The catalysed reaction is ATP + H2O + 4 H(+)(in) = ADP + phosphate + 5 H(+)(out). Functionally, produces ATP from ADP in the presence of a proton gradient across the membrane. The catalytic sites are hosted primarily by the beta subunits. This Blochmanniella pennsylvanica (strain BPEN) protein is ATP synthase subunit beta.